The sequence spans 1617 residues: Mitogen-activated protein kinase kinae kinase bck1 (1617 aa).

9 disordered regions span residues 1–73 (MDGQ…SQLQ), 167–199 (GPVHHLYESSGGDGSAYKRDGTVPPTPSARTMP), 211–253 (SVAS…GGMS), 345–399 (RQIH…SPNL), 455–555 (DHRR…SSSY), 568–633 (KRSK…LRGK), 739–820 (GVPL…ISPE), 832–1144 (EHKR…RGDI), and 1165–1277 (IDLD…EILR). Residues 19-28 (TQPSQSHMLS) are compositionally biased toward low complexity. Residues 44-60 (VMPPPPPGPPPGPPPGP) show a composition bias toward pro residues. Residues 220–248 (TAQNHQSQTGQTNEPTKSPSHRQNNSNTL) show a composition bias toward polar residues. A compositionally biased stretch (polar residues) spans 482–504 (KSGSPATQHATLNQGLSSSSTGD). Positions 524 to 533 (RYYESRKGQE) are enriched in basic and acidic residues. Polar residues-rich tracts occupy residues 535–555 (IRPSPQEMCSRQWTGETSSSY) and 586–596 (ESPTSPVNLRQ). 2 stretches are compositionally biased toward basic and acidic residues: residues 832–841 (EHKREVERKQ) and 871–885 (FDERRVSPYEDKKAD). 2 stretches are compositionally biased toward polar residues: residues 897–907 (PQESYTLTRIN) and 956–980 (GGKQTNFGSFGSPTQGNTKSAPQSS). 2 stretches are compositionally biased toward basic and acidic residues: residues 1128-1140 (EDERPTPRRDSFA) and 1189-1198 (PENDLHKKEN). 2 stretches are compositionally biased toward polar residues: residues 1199 to 1208 (QPSSSYTGEM) and 1257 to 1272 (NQASRSRSIHTGNQKS). Positions 1323-1596 (IIRGQLIGKG…QTLLTRHPFC (274 aa)) constitute a Protein kinase domain. Residues 1329-1337 (IGKGTYGRV) and lysine 1352 each bind ATP.

It belongs to the protein kinase superfamily. STE Ser/Thr protein kinase family. MAP kinase kinase kinase subfamily.

The catalysed reaction is L-seryl-[protein] + ATP = O-phospho-L-seryl-[protein] + ADP + H(+). It carries out the reaction L-threonyl-[protein] + ATP = O-phospho-L-threonyl-[protein] + ADP + H(+). In terms of biological role, mitogen-activated protein kinase kinase kinase; part of cell wall integrity (CWI) signaling pathway composed of pkcA, the bck1-mkk2-mpka MAPK cascade and the downstream rlmA transcription regulator. The CWI signaling pathway regulates cell wall integrity and pyomelanin formation. CWI also controls oxidative stress response, gliotoxin production, iron adaptation and asexual development. Finally, CWI is constitutively required for A.fumigatus to cope with the temperature increase found in the mammalian lung environment, during infection. This Aspergillus fumigatus (strain ATCC MYA-4609 / CBS 101355 / FGSC A1100 / Af293) (Neosartorya fumigata) protein is Mitogen-activated protein kinase kinae kinase bck1.